The sequence spans 328 residues: Stress response kinase A (328 aa).

Catalysis depends on aspartate 201, which acts as the Proton acceptor. Asparagine 206 and aspartate 217 together coordinate Mg(2+). Aspartate 217 is a catalytic residue.

The protein belongs to the SrkA/RdoA protein kinase family. Monomer. Mg(2+) serves as cofactor.

The protein resides in the cytoplasm. It carries out the reaction L-seryl-[protein] + ATP = O-phospho-L-seryl-[protein] + ADP + H(+). The catalysed reaction is L-threonyl-[protein] + ATP = O-phospho-L-threonyl-[protein] + ADP + H(+). A protein kinase that phosphorylates Ser and Thr residues. Probably acts to suppress the effects of stress linked to accumulation of reactive oxygen species. Probably involved in the extracytoplasmic stress response. The polypeptide is Stress response kinase A (Salmonella paratyphi A (strain ATCC 9150 / SARB42)).